The primary structure comprises 173 residues: Regulatory protein RecX (173 aa).

It belongs to the RecX family.

The protein resides in the cytoplasm. Functionally, modulates RecA activity. In Mycobacterium marinum (strain ATCC BAA-535 / M), this protein is Regulatory protein RecX.